The following is a 155-amino-acid chain: Transcriptional repressor NrdR (155 aa).

Residues 3–34 (CPFCSHFESKVVDSRPTDEGQAIRRRRECVSC) fold into a zinc finger. Residues 49–139 (LIVVKKSGNR…VYREFKDINT (91 aa)) enclose the ATP-cone domain.

This sequence belongs to the NrdR family. Zn(2+) serves as cofactor.

In terms of biological role, negatively regulates transcription of bacterial ribonucleotide reductase nrd genes and operons by binding to NrdR-boxes. The sequence is that of Transcriptional repressor NrdR from Alkaliphilus metalliredigens (strain QYMF).